Reading from the N-terminus, the 253-residue chain is Zinc import ATP-binding protein ZnuC (253 aa).

Residues 6 to 227 (VTLNKISVTF…FGNRGAEQLA (222 aa)) form the ABC transporter domain. 38-45 (GPNGAGKS) is a binding site for ATP.

This sequence belongs to the ABC transporter superfamily. Zinc importer (TC 3.A.1.15.5) family. The complex is composed of two ATP-binding proteins (ZnuC), two transmembrane proteins (ZnuB) and a solute-binding protein (ZnuA).

Its subcellular location is the cell inner membrane. The enzyme catalyses Zn(2+)(out) + ATP(in) + H2O(in) = Zn(2+)(in) + ADP(in) + phosphate(in) + H(+)(in). In terms of biological role, part of the ABC transporter complex ZnuABC involved in zinc import. Responsible for energy coupling to the transport system. This is Zinc import ATP-binding protein ZnuC from Yersinia pestis bv. Antiqua (strain Antiqua).